Consider the following 69-residue polypeptide: U-Asilidin(12)-Dg3b (69 aa).

The signal sequence occupies residues 1–19 (MRFLNIFLFFAVMIAFVSA). Positions 20-33 (SPVLEEEEIDIEPR) are excised as a propeptide. Cystine bridges form between Cys36–Cys59, Cys45–Cys65, and Cys49–Cys67.

This sequence belongs to the asilidin-12 family. As to expression, expressed by the venom gland.

It localises to the secreted. The recombinant peptide moderately increases Kv11.1/KCNH2/ERG1 currents and shifts the voltage-dependence of the channel activation to hyperpolarised potentials. In vivo, induces neurotoxic effects when injected into insects (tested on L.cuprina and A.domesticus). This is U-Asilidin(12)-Dg3b from Dolopus genitalis (Giant Australian assassin fly).